The following is a 61-amino-acid chain: Insect toxin AaHIT5 (61 aa).

The 61-residue stretch at 1–61 (DGYIKRHDGC…AWKSETNTCD (61 aa)) folds into the LCN-type CS-alpha/beta domain. 4 disulfides stabilise this stretch: cysteine 10–cysteine 60, cysteine 14–cysteine 35, cysteine 21–cysteine 42, and cysteine 25–cysteine 44.

Expressed by the venom gland.

It localises to the secreted. Functionally, excitatory insect toxins induce a spastic paralysis. They bind voltage-independently to sodium channels (Nav) and shift the voltage of activation toward more negative potentials thereby affecting sodium channel activation and promoting spontaneous and repetitive firing. This toxin elicits excitatory activity with no flaccid paralysis despite its high degree of sequence similarity with other depressant insect toxins. This toxin is active only on insects. This is Insect toxin AaHIT5 from Androctonus australis (Sahara scorpion).